Here is a 104-residue protein sequence, read N- to C-terminus: Protein translation factor SUI1 homolog (104 aa).

This sequence belongs to the SUI1 family.

In Ignicoccus hospitalis (strain KIN4/I / DSM 18386 / JCM 14125), this protein is Protein translation factor SUI1 homolog.